A 310-amino-acid polypeptide reads, in one-letter code: Protein OS-9 homolog (310 aa).

Positions 1-40 (MFSSSMFPHLILPAIGSSKVRTMVLPFAFVGFFIFPICLA) are cleaved as a signal peptide. Residues N60, N97, and N104 are each glycosylated (N-linked (GlcNAc...) asparagine). One can recognise an MRH domain in the interval 129 to 255 (NVFLIENRGY…TIHVPGLCSL (127 aa)). The a mannooligosaccharide derivative site is built by W139 and Q151. Residue N204 is glycosylated (N-linked (GlcNAc...) asparagine). Disulfide bonds link C208–C241 and C223–C253. A mannooligosaccharide derivative-binding residues include D209, R215, E237, and Y243. 2 stretches are compositionally biased toward basic and acidic residues: residues 282–292 (VDHKDSQHVVD) and 301–310 (EVKEVETQSS). Residues 282–310 (VDHKDSQHVVDEVAQTSPPEVKEVETQSS) are disordered.

This sequence belongs to the OS-9 family. In terms of assembly, interacts with missfolded ER lumenal proteins.

The protein localises to the endoplasmic reticulum membrane. Its function is as follows. Lectin involved in the quality control of the secretory pathway. As a member of the endoplasmic reticulum-associated degradation lumenal (ERAD-L) surveillance system, targets misfolded endoplasmic reticulum lumenal glycoproteins for degradation. The polypeptide is Protein OS-9 homolog (yos9) (Schizosaccharomyces pombe (strain 972 / ATCC 24843) (Fission yeast)).